The following is a 178-amino-acid chain: Large ribosomal subunit protein eL20 (178 aa).

It belongs to the eukaryotic ribosomal protein eL20 family.

The chain is Large ribosomal subunit protein eL20 (RPL18A) from Castanea sativa (Sweet chestnut).